We begin with the raw amino-acid sequence, 647 residues long: Starch synthase 1, chloroplastic/amyloplastic (647 aa).

A chloroplast-targeting transit peptide spans 1 to 41; sequence MAATGVGAGCLAPSVRLRADPATAARASACVVRARLRRVAR. Positions 66 to 91 are enriched in pro residues; the sequence is PLVPGFLAPPPPAPAQSPAPTQPPLP. Residues 66-95 are disordered; that stretch reads PLVPGFLAPPPPAPAQSPAPTQPPLPDAGV. Lysine 153 is an ADP-alpha-D-glucose binding site.

This sequence belongs to the glycosyltransferase 1 family. Bacterial/plant glycogen synthase subfamily.

It is found in the plastid. Its subcellular location is the chloroplast. It localises to the amyloplast. It carries out the reaction [(1-&gt;4)-alpha-D-glucosyl](n) + ADP-alpha-D-glucose = [(1-&gt;4)-alpha-D-glucosyl](n+1) + ADP + H(+). Its pathway is glycan biosynthesis; starch biosynthesis. This Triticum aestivum (Wheat) protein is Starch synthase 1, chloroplastic/amyloplastic (WSSI-2).